The chain runs to 63 residues: Large ribosomal subunit protein bL28 (63 aa).

A disordered region spans residues 1 to 20 (MSKRCAITGKGPMVGNNVSH).

It belongs to the bacterial ribosomal protein bL28 family.

The chain is Large ribosomal subunit protein bL28 from Campylobacter fetus subsp. fetus (strain 82-40).